The primary structure comprises 209 residues: MAFDQDWVPKTRLGKLVVEGQVASMDEAIKSGLPIREPQIIDMLLPDLEDEVLDINMVQRMTDSGRRVKFRATVIVGNRNGYVGLGQAKDVQVGPAIRKAIDAAKLNITYIRRGCGSWECACGLPHTVPYEVTGKAGSVSVTLIPAPRGLGIAAGNTATKVLEKAGIKDVWTKTFGTTRSTLNFAKATYDALNQVNVVRLPVYYGKEEV.

Positions 48–111 (LEDEVLDINM…DAAKLNITYI (64 aa)) constitute an S5 DRBM domain.

Belongs to the universal ribosomal protein uS5 family. In terms of assembly, part of the 30S ribosomal subunit. Contacts protein S4.

Its function is as follows. With S4 and S12 plays an important role in translational accuracy. This Methanosarcina acetivorans (strain ATCC 35395 / DSM 2834 / JCM 12185 / C2A) protein is Small ribosomal subunit protein uS5.